A 422-amino-acid chain; its full sequence is MLSLIPFTVCAFLALITSKGGSATPSTISLECSENDVCAALETLTRRQDRLQKTLNLCTDDESQFTLTAVVKCTSVIQVPFPNRHFKMAALDLSSGICRALAQPVVASQAYTVSAEILNEAGWKGVNSGHPGLLFNAIDENNFDFVYLRPHSVSGCYQTGYMSAGVNKFVESKRCPNGPPKGGEWFPFSVTVNGQYATVYRSGVLVTTFKTHFASSRARGGVFIFNGYKNVILFRKFKTAPKHFFSKRCKEVVEFPAGYVKMDAGIGSWPKDAFCQVEFGSDGRIASYELKVDLYNFIGRDKANLGHPGVFFNAEDEDNYDFVYFRPHSVGGCFQTGYLLKGKPRFDGAKSASCPKGPPKGKTWFNVKLTVSNATPAGEVRVYLDDTLVTSFNPRYPIKRRGGVLVANGYKNVIYLRNFKIL.

The N-terminal stretch at 1–23 (MLSLIPFTVCAFLALITSKGGSA) is a signal peptide.

As to expression, component of the acid-insoluble organic matrix of the aragonitic skeleton (at protein level).

The protein localises to the secreted. This is an uncharacterized protein from Acropora millepora (Staghorn coral).